An 89-amino-acid polypeptide reads, in one-letter code: Small ribosomal subunit protein uS15 (89 aa).

It belongs to the universal ribosomal protein uS15 family. As to quaternary structure, part of the 30S ribosomal subunit. Forms a bridge to the 50S subunit in the 70S ribosome, contacting the 23S rRNA.

Its function is as follows. One of the primary rRNA binding proteins, it binds directly to 16S rRNA where it helps nucleate assembly of the platform of the 30S subunit by binding and bridging several RNA helices of the 16S rRNA. In terms of biological role, forms an intersubunit bridge (bridge B4) with the 23S rRNA of the 50S subunit in the ribosome. The chain is Small ribosomal subunit protein uS15 from Sinorhizobium medicae (strain WSM419) (Ensifer medicae).